A 431-amino-acid chain; its full sequence is Protein translocase subunit SecY (431 aa).

The next 10 helical transmembrane spans lie at 18-38 (IIFT…PVPH), 64-84 (LFNF…SIII), 116-136 (FTIV…NNMA), 146-166 (VGTY…LMWL), 175-195 (VGNG…PQTI), 214-234 (IIKV…VIFI), 262-282 (LPLK…AFIT), 309-329 (PVGM…YAFV), 369-389 (FVGS…VNIA), and 390-410 (GLPS…GVAL).

The protein belongs to the SecY/SEC61-alpha family. Component of the Sec protein translocase complex. Heterotrimer consisting of SecY, SecE and SecG subunits. The heterotrimers can form oligomers, although 1 heterotrimer is thought to be able to translocate proteins. Interacts with the ribosome. Interacts with SecDF, and other proteins may be involved. Interacts with SecA.

Its subcellular location is the cell membrane. Functionally, the central subunit of the protein translocation channel SecYEG. Consists of two halves formed by TMs 1-5 and 6-10. These two domains form a lateral gate at the front which open onto the bilayer between TMs 2 and 7, and are clamped together by SecE at the back. The channel is closed by both a pore ring composed of hydrophobic SecY resides and a short helix (helix 2A) on the extracellular side of the membrane which forms a plug. The plug probably moves laterally to allow the channel to open. The ring and the pore may move independently. This is Protein translocase subunit SecY from Bacillus licheniformis (strain ATCC 14580 / DSM 13 / JCM 2505 / CCUG 7422 / NBRC 12200 / NCIMB 9375 / NCTC 10341 / NRRL NRS-1264 / Gibson 46).